We begin with the raw amino-acid sequence, 180 residues long: Translation machinery-associated protein 16 homolog (180 aa).

Residues 1–12 are compositionally biased toward basic and acidic residues; sequence MTNLRKELEKCK. The segment at 1–32 is disordered; it reads MTNLRKELEKCKHPNSRKTKALGKKARRQNNK. Positions 13–32 are enriched in basic residues; that stretch reads HPNSRKTKALGKKARRQNNK.

It belongs to the TMA16 family.

This chain is Translation machinery-associated protein 16 homolog, found in Drosophila melanogaster (Fruit fly).